The sequence spans 422 residues: CRISPR-associated endodeoxyribonuclease Cas12f1 (422 aa).

The interval 1-126 (MIKVYRYEIV…PSYKRDIPLD (126 aa)) is recognition domain (REC). A wedge domain (WED) region spans residues 127 to 211 (LIKENISVNR…YLNISYDFEP (85 aa)). The tract at residues 212–220 (QTRVLDLNK) is linker. The interval 221–370 (IMGIDLGVAV…IKIDPQYTSQ (150 aa)) is ruvC-I. Active-site residues include Asp-225 and Glu-324. The interval 371–399 (RCSECGNIDSGNRIGQAIFKCRACGYEAN) is target nucleic acid-binding (TNB). Zn(2+)-binding residues include Cys-372, Cys-375, Cys-391, and Cys-394. Residues 400 to 420 (ADYNAARNIAIPNIDKIIAES) are ruvC-II. The active site involves Asp-401.

This sequence belongs to the CRISPR-associated endonuclease Cas12f family. An asymmetric homodimer. Guide RNA is probably required for dimerization. Mg(2+) is required as a cofactor. The cofactor is Zn(2+).

Its function is as follows. CRISPR (clustered regularly interspaced short palindromic repeat), is an adaptive immune system that provides protection against mobile genetic elements (viruses, transposable elements and conjugative plasmids). CRISPR clusters contain sequences complementary to antecedent mobile elements and target invading nucleic acids. CRISPR clusters are transcribed and processed into CRISPR RNA (crRNA), which requires a trans-encoded small RNA (tracrRNA), but not this protein. Recognizes a short motif in the CRISPR repeat sequences (the 5' PAM or protospacer adjacent motif, YTT in this organism) to help distinguish self versus nonself, as targets within the CRISPR locus do not have PAMs. Has dsDNA endonuclease activity upon expression in E.coli of this protein, a mini CRISPR array and the probable tracrRNA. Plasmid cleavage is centered around positions 19-24 base pairs 3' of PAM. The mini system protects E.coli against transformation by foreign plasmids. The chain is CRISPR-associated endodeoxyribonuclease Cas12f1 from Sulfoacidibacillus thermotolerans (Acidibacillus sulfuroxidans).